The following is a 431-amino-acid chain: Arginine biosynthesis bifunctional protein ArgJ, mitochondrial (431 aa).

Substrate contacts are provided by T174, K200, T211, E297, N426, and T431. Residue T211 is the Nucleophile of the active site.

This sequence belongs to the ArgJ family. In terms of assembly, heterodimer of an alpha and a beta chain. The alpha and beta chains are autoproteolytically processed from a single precursor protein within the mitochondrion.

It localises to the mitochondrion matrix. It catalyses the reaction N(2)-acetyl-L-ornithine + L-glutamate = N-acetyl-L-glutamate + L-ornithine. It carries out the reaction L-glutamate + acetyl-CoA = N-acetyl-L-glutamate + CoA + H(+). The protein operates within amino-acid biosynthesis; L-arginine biosynthesis; L-ornithine and N-acetyl-L-glutamate from L-glutamate and N(2)-acetyl-L-ornithine (cyclic): step 1/1. It functions in the pathway amino-acid biosynthesis; L-arginine biosynthesis; N(2)-acetyl-L-ornithine from L-glutamate: step 1/4. Its function is as follows. Catalyzes two activities which are involved in the cyclic version of arginine biosynthesis: the synthesis of acetylglutamate from glutamate and acetyl-CoA, and of ornithine by transacetylation between acetylornithine and glutamate. In Yarrowia lipolytica (strain CLIB 122 / E 150) (Yeast), this protein is Arginine biosynthesis bifunctional protein ArgJ, mitochondrial.